A 907-amino-acid polypeptide reads, in one-letter code: Androgen receptor (907 aa).

The modulating stretch occupies residues Met-1 to Lys-545. Positions Met-1–Ala-574 are interaction with ZNF318. Disordered regions lie at residues Asn-36 to Leu-152 and Gln-200 to Gly-231. Positions Gln-55–Gln-76 are enriched in low complexity. Residue Ser-67 is modified to Phosphoserine; by CDK9. Position 81 is a phosphoserine (Ser-81). The segment covering Thr-123–Gln-134 has biased composition (polar residues). The segment covering Gln-200 to Ser-224 has biased composition (low complexity). Position 228 is a phosphotyrosine; by CSK (Tyr-228). At Ser-261 the chain carries Phosphoserine. Residue Tyr-272 is modified to Phosphotyrosine; by CSK and TNK2. A phosphotyrosine; by CSK mark is found at Tyr-310, Tyr-349, Tyr-360, and Tyr-365. A Phosphotyrosine; by CSK and TNK2 modification is found at Tyr-366. A Glycyl lysine isopeptide (Lys-Gly) (interchain with G-Cter in SUMO) cross-link involves residue Lys-389. Tyr-396 is subject to Phosphotyrosine; by CSK. Lys-508 participates in a covalent cross-link: Glycyl lysine isopeptide (Lys-Gly) (interchain with G-Cter in SUMO). 2 positions are modified to phosphotyrosine; by CSK: Tyr-522 and Tyr-539. Residues Tyr-539–Thr-906 are interaction with LPXN. Residues Thr-546–Leu-619 constitute a DNA-binding region (nuclear receptor). NR C4-type zinc fingers lie at residues Cys-547–Cys-567 and Cys-583–Cys-607. The interval Tyr-559–Val-649 is interaction with HIPK3. Residues Gln-579–Thr-906 are interaction with CCAR1. Residues Met-612–Thr-906 form an interaction with KAT7 region. Phosphoserine; by STK4/MST1 is present on Ser-638. The 232-residue stretch at Glu-656–Ile-887 folds into the NR LBD domain. 17beta-hydroxy-5alpha-androstan-3-one contacts are provided by Asn-693 and Arg-740. Glycyl lysine isopeptide (Lys-Gly) (interchain with G-Cter in ubiquitin) cross-links involve residues Lys-833 and Lys-835. Thr-865 provides a ligand contact to 17beta-hydroxy-5alpha-androstan-3-one. The residue at position 903 (Tyr-903) is a Phosphotyrosine; by CSK.

It belongs to the nuclear hormone receptor family. NR3 subfamily. Binds DNA as a homodimer. Part of a ternary complex containing AR, EFCAB6/DJBP and PARK7. Interacts with HIPK3 and NR0B2 in the presence of androgen. The ligand binding domain interacts with KAT7/HBO1 in the presence of dihydrotestosterone. Interacts with EFCAB6/DJBP, PQBP1, RANBP9, RBAK, SPDEF, SRA1, TGFB1I1 and RREB1. Interacts with ZMIZ1/ZIMP10 and ZMIZ2/ZMIP7 which both enhance its transactivation activity. Interacts with SLC30A9 and RAD54L2/ARIP4. Interacts with MACROD1 (via macro domain). Interacts via the ligand-binding domain with LXXLL and FXXLF motifs from NCOA1, NCOA2, NCOA3 and MAGEA11. Interacts (via nuclear receptor DNA binding domain and nuclear receptor ligand binding domain) with NCOA4. The AR N-terminal poly-Gln region binds Ran resulting in enhancement of AR-mediated transactivation. Ran-binding decreases as the poly-Gln length increases. Interacts with HIP1 (via coiled coil domain). Interacts (via ligand-binding domain) with TRIM68. Interacts with TNK2. Interacts with USP26. Interacts with RNF6. Interacts (regulated by RNF6 probably through polyubiquitination) with RNF14; regulates AR transcriptional activity. Interacts with PRMT2 and TRIM24. Interacts with RACK1. Interacts with RANBP10; this interaction enhances dihydrotestosterone-induced AR transcriptional activity. Interacts with PRPF6 in a hormone-independent way; this interaction enhances dihydrotestosterone-induced AR transcriptional activity. Interacts with STK4/MST1. Interacts with ZIPK/DAPK3. Interacts with LPXN. Interacts with MAK. Part of a complex containing AR, MAK and NCOA3. Interacts with CRY1. Interacts with CCAR1 and GATA2. Interacts with ZNF318. Interacts with BUD31. Interacts with ARID4A. Interacts with ARID4B. Interacts (via NR LBD domain) with ZBTB7A; the interaction is direct and androgen-dependent. Interacts with NCOR1. Interacts with NCOR2. Interacts witH CRY2 in a ligand-dependent manner. In terms of processing, phosphorylated in prostate cancer cells in response to several growth factors including EGF. Phosphorylation is induced by c-Src kinase (CSK). Tyr-522 is one of the major phosphorylation sites and an increase in phosphorylation and Src kinase activity is associated with prostate cancer progression. Phosphorylation by TNK2 enhances the DNA-binding and transcriptional activity. Phosphorylation at Ser-67 by CDK9 regulates AR promoter selectivity and cell growth. Sumoylated on Lys-389 (major) and Lys-508. Ubiquitinated. Deubiquitinated by USP26. 'Lys-6' and 'Lys-27'-linked polyubiquitination by RNF6 modulates AR transcriptional activity and specificity. Post-translationally, palmitoylated by ZDHHC7 and ZDHHC21. Palmitoylation is required for plasma membrane targeting and for rapid intracellular signaling via ERK and AKT kinases and cAMP generation.

The protein localises to the nucleus. Its subcellular location is the cytoplasm. Functionally, steroid hormone receptors are ligand-activated transcription factors that regulate eukaryotic gene expression and affect cellular proliferation and differentiation in target tissues. Transcription factor activity is modulated by bound coactivator and corepressor proteins like ZBTB7A that recruits NCOR1 and NCOR2 to the androgen response elements/ARE on target genes, negatively regulating androgen receptor signaling and androgen-induced cell proliferation. Transcription activation is also down-regulated by NR0B2. Activated, but not phosphorylated, by HIPK3 and ZIPK/DAPK3. This is Androgen receptor (AR) from Canis lupus familiaris (Dog).